The primary structure comprises 152 residues: Xanthine-guanine phosphoribosyltransferase (152 aa).

Residues Arg-37–Gly-38, Arg-69, and Asp-88–Thr-96 each bind 5-phospho-alpha-D-ribose 1-diphosphate. GMP is bound at residue Arg-69. Residue Asp-89 participates in Mg(2+) binding. Guanine contacts are provided by Asp-92 and Ile-135. Xanthine-binding residues include Asp-92 and Ile-135. GMP contacts are provided by residues Asp-92–Thr-96 and Trp-134–Ile-135.

The protein belongs to the purine/pyrimidine phosphoribosyltransferase family. XGPT subfamily. As to quaternary structure, homotetramer. Mg(2+) serves as cofactor.

The protein localises to the cell inner membrane. It carries out the reaction GMP + diphosphate = guanine + 5-phospho-alpha-D-ribose 1-diphosphate. The catalysed reaction is XMP + diphosphate = xanthine + 5-phospho-alpha-D-ribose 1-diphosphate. It catalyses the reaction IMP + diphosphate = hypoxanthine + 5-phospho-alpha-D-ribose 1-diphosphate. It functions in the pathway purine metabolism; GMP biosynthesis via salvage pathway; GMP from guanine: step 1/1. The protein operates within purine metabolism; XMP biosynthesis via salvage pathway; XMP from xanthine: step 1/1. Its function is as follows. Purine salvage pathway enzyme that catalyzes the transfer of the ribosyl-5-phosphate group from 5-phospho-alpha-D-ribose 1-diphosphate (PRPP) to the N9 position of the 6-oxopurines guanine and xanthine to form the corresponding ribonucleotides GMP (guanosine 5'-monophosphate) and XMP (xanthosine 5'-monophosphate), with the release of PPi. To a lesser extent, also acts on hypoxanthine. The chain is Xanthine-guanine phosphoribosyltransferase from Pectobacterium carotovorum subsp. carotovorum (strain PC1).